The chain runs to 207 residues: Guanylate kinase (207 aa).

The Guanylate kinase-like domain occupies 5–184 (GNLFIVSAPS…ALADLRAIIR (180 aa)). ATP is bound at residue 12–19 (APSGAGKS).

It belongs to the guanylate kinase family.

The protein resides in the cytoplasm. It carries out the reaction GMP + ATP = GDP + ADP. Its function is as follows. Essential for recycling GMP and indirectly, cGMP. The protein is Guanylate kinase of Shewanella sp. (strain MR-7).